We begin with the raw amino-acid sequence, 186 residues long: Adenylate kinase (186 aa).

An ATP-binding site is contributed by 10-15 (GSGKGT). Residues 30 to 55 (ATGDVFRERMKTDMALRDIVSSGGYV) form an NMP region. AMP is bound by residues T31, R36, 53-55 (GYV), 81-84 (GYPR), and Q88. An LID region spans residues 122 to 132 (ARSKESGRTDD). R123 serves as a coordination point for ATP. Residues R129 and R140 each coordinate AMP. K168 provides a ligand contact to ATP.

Belongs to the adenylate kinase family. In terms of assembly, monomer.

Its subcellular location is the cytoplasm. The catalysed reaction is AMP + ATP = 2 ADP. The protein operates within purine metabolism; AMP biosynthesis via salvage pathway; AMP from ADP: step 1/1. Functionally, catalyzes the reversible transfer of the terminal phosphate group between ATP and AMP. Plays an important role in cellular energy homeostasis and in adenine nucleotide metabolism. The chain is Adenylate kinase from Tropheryma whipplei (strain TW08/27) (Whipple's bacillus).